The primary structure comprises 475 residues: DnaB-like replicative helicase (475 aa).

An SF4 helicase domain is found at 165 to 444 (YMNKARKVPF…STPTEVNEVA (280 aa)). An ATP-binding site is contributed by 197–204 (AGVNVGKS). Residues 456–475 (YQRNESTRAQLDALANELKF) form an interaction with the helicase assembly factor region.

It belongs to the helicase family. DnaB subfamily. As to quaternary structure, homohexamer. The homohexamer is a trimer of asymmetric dimers. Interacts with the DNA primase; this interaction forms the active primosome complex, which is composed of 6 helicase and 1 primase subunits and expresses full helicase and primase activities. Interacts (via C-terminus) with the helicase assembly factor; this interaction brings about the rapid assembly of the helicase onto ssDNA. Part of the replicase complex that includes the DNA polymerase, the polymerase clamp, the clamp loader complex, the single-stranded DNA binding protein, the primase, the DnaB-like replicative helicase and the helicase assembly factor.

ATP-dependent DNA helicase essential for viral DNA replication and recombination. The helicase moves 5' -&gt; 3' on the lagging strand template, unwinding the DNA duplex ahead of the leading strand polymerase at the replication fork and generating ssDNA for both leading and lagging strand synthesis. Interaction with the primase allows the primase to initiate lagging strand synthesis and fully activates the helicase. Loaded by the helicase assembly factor on replication forks that begin at discrete replication origin sequences, as well as on forks that are created during recombination. This Escherichia coli (Bacteriophage T4) protein is DnaB-like replicative helicase.